Consider the following 389-residue polypeptide: UDP-N-acetylglucosamine--N-acetylmuramyl-(pentapeptide) pyrophosphoryl-undecaprenol N-acetylglucosamine transferase (389 aa).

UDP-N-acetyl-alpha-D-glucosamine-binding positions include 39-41 (TGG), N157, R193, S221, I275, 294-299 (ALTVSE), and Q320.

Belongs to the glycosyltransferase 28 family. MurG subfamily.

The protein resides in the cell inner membrane. The catalysed reaction is di-trans,octa-cis-undecaprenyl diphospho-N-acetyl-alpha-D-muramoyl-L-alanyl-D-glutamyl-meso-2,6-diaminopimeloyl-D-alanyl-D-alanine + UDP-N-acetyl-alpha-D-glucosamine = di-trans,octa-cis-undecaprenyl diphospho-[N-acetyl-alpha-D-glucosaminyl-(1-&gt;4)]-N-acetyl-alpha-D-muramoyl-L-alanyl-D-glutamyl-meso-2,6-diaminopimeloyl-D-alanyl-D-alanine + UDP + H(+). It participates in cell wall biogenesis; peptidoglycan biosynthesis. Functionally, cell wall formation. Catalyzes the transfer of a GlcNAc subunit on undecaprenyl-pyrophosphoryl-MurNAc-pentapeptide (lipid intermediate I) to form undecaprenyl-pyrophosphoryl-MurNAc-(pentapeptide)GlcNAc (lipid intermediate II). This is UDP-N-acetylglucosamine--N-acetylmuramyl-(pentapeptide) pyrophosphoryl-undecaprenol N-acetylglucosamine transferase from Saccharophagus degradans (strain 2-40 / ATCC 43961 / DSM 17024).